We begin with the raw amino-acid sequence, 375 residues long: L-asparaginase 2 (375 aa).

The first 19 residues, Met1–Gly19, serve as a signal peptide directing secretion. The segment at His22–Glu46 is disordered. Basic and acidic residues predominate over residues Pro24–Gln35. The region spanning Pro51–Tyr375 is the Asparaginase/glutaminase domain. Thr61 serves as the catalytic O-isoaspartyl threonine intermediate. Residues Ser108 and Thr141–Asp142 each bind substrate.

This sequence belongs to the asparaginase 1 family. As to quaternary structure, homotetramer.

The catalysed reaction is L-asparagine + H2O = L-aspartate + NH4(+). In terms of biological role, catalyzes the conversion of L-asparagine to L-aspartate and ammonium. The sequence is that of L-asparaginase 2 (ansZ) from Bacillus subtilis (strain 168).